Reading from the N-terminus, the 851-residue chain is Protein translocase subunit SecA (851 aa).

ATP-binding positions include Gln-88, 106-110, and Asp-496; that span reads GEGKT. Residues Cys-828, Cys-830, Cys-839, and His-840 each coordinate Zn(2+).

The protein belongs to the SecA family. Monomer and homodimer. Part of the essential Sec protein translocation apparatus which comprises SecA, SecYEG and auxiliary proteins SecDF-YajC and YidC. Zn(2+) is required as a cofactor.

Its subcellular location is the cell inner membrane. It is found in the cytoplasm. It carries out the reaction ATP + H2O + cellular proteinSide 1 = ADP + phosphate + cellular proteinSide 2.. Part of the Sec protein translocase complex. Interacts with the SecYEG preprotein conducting channel. Has a central role in coupling the hydrolysis of ATP to the transfer of proteins into and across the cell membrane, serving as an ATP-driven molecular motor driving the stepwise translocation of polypeptide chains across the membrane. The chain is Protein translocase subunit SecA from Helicobacter hepaticus (strain ATCC 51449 / 3B1).